Here is a 113-residue protein sequence, read N- to C-terminus: Hydrogenase maturation factor HypA (113 aa).

A Ni(2+)-binding site is contributed by histidine 2. Residues cysteine 73, cysteine 76, cysteine 89, and cysteine 92 each coordinate Zn(2+).

Belongs to the HypA/HybF family.

In terms of biological role, involved in the maturation of [NiFe] hydrogenases. Required for nickel insertion into the metal center of the hydrogenase. In Rhodopseudomonas palustris (strain BisB5), this protein is Hydrogenase maturation factor HypA.